Reading from the N-terminus, the 245-residue chain is Carbohydrate deacetylase (245 aa).

Positions 59 and 125 each coordinate Mg(2+).

Belongs to the YdjC deacetylase family. As to quaternary structure, homodimer. The cofactor is Mg(2+).

In terms of biological role, probably catalyzes the deacetylation of acetylated carbohydrates an important step in the degradation of oligosaccharides. This chain is Carbohydrate deacetylase, found in Listeria welshimeri serovar 6b (strain ATCC 35897 / DSM 20650 / CCUG 15529 / CIP 8149 / NCTC 11857 / SLCC 5334 / V8).